The following is a 392-amino-acid chain: 5-azacytidine-induced protein 2 (392 aa).

Residues 1–197 (MDALVEDDIC…IELQKAKQTD (197 aa)) are homodimerization. 3 coiled-coil regions span residues 40–76 (ALVTAYEDIKKRLKDSEKENSLLKKRIRFLEEKLIAR), 102–135 (DRDNLKSKLDKMNKDNSESLKVLNEQLQSKEVEL), and 166–196 (DLKIHGLEQELELMRKECSDLKIELQKAKQT). The tract at residues 216 to 257 (SDNMQHAYWELKREMSNLHLVTQVQAELLRKLKTSTAIKKAC) is interaction with TBK1 and IKBKE. A phosphoserine mark is found at S318 and S353. Residues 345–365 (EDNSWVFPSPPKSSETAFGET) form a disordered region.

In terms of assembly, homodimer. Interacts with IKBKE, TBK1 and TICAM1. Interacts with TAX1BP1. Interacts with CALCOCO2. In terms of processing, ubiquitinated via 'Lys-48'-linked polyubiquitination by TRIM38, leading to its degradation.

It localises to the cytoplasm. Functionally, adapter protein which binds TBK1 and IKBKE playing a role in antiviral innate immunity. Activates serine/threonine-protein kinase TBK1 and facilitates its oligomerization. Enhances the phosphorylation of NF-kappa-B p65 subunit RELA by TBK1. Promotes TBK1-induced as well as TNF-alpha or PMA-induced activation of NF-kappa-B. Participates in IFNB promoter activation via TICAM1. In Pongo abelii (Sumatran orangutan), this protein is 5-azacytidine-induced protein 2 (AZI2).